We begin with the raw amino-acid sequence, 176 residues long: Ribosome maturation factor RimM (176 aa).

The 74-residue stretch at 103 to 176 folds into the PRC barrel domain; sequence QNDEYYFYEI…KIVVKELEWI (74 aa).

It belongs to the RimM family. As to quaternary structure, binds ribosomal protein uS19.

It localises to the cytoplasm. Its function is as follows. An accessory protein needed during the final step in the assembly of 30S ribosomal subunit, possibly for assembly of the head region. Essential for efficient processing of 16S rRNA. May be needed both before and after RbfA during the maturation of 16S rRNA. It has affinity for free ribosomal 30S subunits but not for 70S ribosomes. The chain is Ribosome maturation factor RimM from Thermotoga neapolitana (strain ATCC 49049 / DSM 4359 / NBRC 107923 / NS-E).